Here is a 91-residue protein sequence, read N- to C-terminus: MSVKIRLKRMGSKKRPFYRVVVADSRSPRDGRFIEQVGTYNPVTEPAQVTLKEESILNWLNNGAQPSDTVKTLLSNAGIMKQYHEAKYTKK.

The protein belongs to the bacterial ribosomal protein bS16 family.

This Levilactobacillus brevis (strain ATCC 367 / BCRC 12310 / CIP 105137 / JCM 1170 / LMG 11437 / NCIMB 947 / NCTC 947) (Lactobacillus brevis) protein is Small ribosomal subunit protein bS16.